The sequence spans 20 residues: Putative 60 kDa spermidine-binding protein (20 aa).

Residues 1 to 20 (SXAAVVEPPETSQNRIAKGE) are disordered. The segment covering 10-20 (ETSQNRIAKGE) has biased composition (polar residues).

In terms of assembly, dimer of 18 kDa and 60 kDa subunit.

It localises to the microsome membrane. The protein localises to the endoplasmic reticulum membrane. Its function is as follows. May have spermidine-binding activity. The chain is Putative 60 kDa spermidine-binding protein from Zea mays (Maize).